Here is a 120-residue protein sequence, read N- to C-terminus: Photosystem II extrinsic protein U (120 aa).

The N-terminal stretch at 1–29 (MKRLLSLLTGVLVMTGLLMALIFPQSAYA) is a signal peptide.

It belongs to the PsbU family. PSII is composed of 1 copy each of membrane proteins PsbA, PsbB, PsbC, PsbD, PsbE, PsbF, PsbH, PsbI, PsbJ, PsbK, PsbL, PsbM, PsbT, PsbX, PsbY, Psb30/Ycf12, peripheral proteins PsbO, CyanoQ (PsbQ), PsbU, PsbV and a large number of cofactors. It forms dimeric complexes.

Its subcellular location is the cellular thylakoid membrane. Functionally, one of the extrinsic, lumenal subunits of photosystem II (PSII). PSII is a light-driven water plastoquinone oxidoreductase, using light energy to abstract electrons from H(2)O, generating a proton gradient subsequently used for ATP formation. The extrinsic proteins stabilize the structure of photosystem II oxygen-evolving complex (OEC), the ion environment of oxygen evolution and protect the OEC against heat-induced inactivation. This chain is Photosystem II extrinsic protein U, found in Prochlorococcus marinus (strain MIT 9303).